We begin with the raw amino-acid sequence, 241 residues long: 6-hydroxymethyl-7,8-dihydropterin pyrophosphokinase (241 aa).

The protein belongs to the archaeal 6-HMPDK family. Requires Mg(2+) as cofactor.

It catalyses the reaction 6-hydroxymethyl-7,8-dihydropterin + ATP = (7,8-dihydropterin-6-yl)methyl diphosphate + AMP + H(+). The protein operates within cofactor biosynthesis; 5,6,7,8-tetrahydromethanopterin biosynthesis. Its function is as follows. Catalyzes the transfer of diphosphate from ATP to 6-hydroxymethyl-7,8-dihydropterin (6-HMD), leading to 6-hydroxymethyl-7,8-dihydropterin diphosphate (6-HMDP). In Methanocaldococcus jannaschii (strain ATCC 43067 / DSM 2661 / JAL-1 / JCM 10045 / NBRC 100440) (Methanococcus jannaschii), this protein is 6-hydroxymethyl-7,8-dihydropterin pyrophosphokinase.